A 293-amino-acid chain; its full sequence is Acetylglutamate kinase (293 aa).

Substrate is bound by residues 60–61 (GG), Arg82, and Asn188.

This sequence belongs to the acetylglutamate kinase family. ArgB subfamily.

Its subcellular location is the cytoplasm. It catalyses the reaction N-acetyl-L-glutamate + ATP = N-acetyl-L-glutamyl 5-phosphate + ADP. It participates in amino-acid biosynthesis; L-arginine biosynthesis; N(2)-acetyl-L-ornithine from L-glutamate: step 2/4. Functionally, catalyzes the ATP-dependent phosphorylation of N-acetyl-L-glutamate. The protein is Acetylglutamate kinase of Methanothermobacter thermautotrophicus (strain ATCC 29096 / DSM 1053 / JCM 10044 / NBRC 100330 / Delta H) (Methanobacterium thermoautotrophicum).